Here is a 152-residue protein sequence, read N- to C-terminus: Nucleoside diphosphate kinase A (152 aa).

Lys12, Phe60, Arg88, and Thr94 together coordinate ATP. Lys100 is covalently cross-linked (Glycyl lysine isopeptide (Lys-Gly) (interchain with G-Cter in ubiquitin)). ATP is bound by residues Arg105 and Asn115. The active-site Pros-phosphohistidine intermediate is His118. Phosphoserine occurs at positions 120, 122, and 125.

The protein belongs to the NDK family. In terms of assembly, hexamer of two different chains: An and B (A6, A5B, A4B2, A3B3, A2B4, AB5, B6). Interacts with PRUNE1. Component of the SET complex, composed of at least ANP32A, APEX1, HMGB2, NME1, SET and TREX1. Within this complex, interacts directly with SET. Also interacts with TREX1, but only following translocation to the nucleus. The cofactor is Mg(2+). As to expression, isoform 1 is expressed in heart, brain, placenta, lung, liver, skeletal muscle, pancreas, spleen and thymus. Expressed in lung carcinoma cell lines but not in normal lung tissues. Isoform 2 is ubiquitously expressed and its expression is also related to tumor differentiation.

It localises to the cytoplasm. It is found in the nucleus. The catalysed reaction is a 2'-deoxyribonucleoside 5'-diphosphate + ATP = a 2'-deoxyribonucleoside 5'-triphosphate + ADP. It catalyses the reaction a ribonucleoside 5'-diphosphate + ATP = a ribonucleoside 5'-triphosphate + ADP. Autophosphorylation at His-118 increases serine/threonine protein kinase activity of the enzyme. Interaction with the SET complex inhibits the endonuclease activity. Its function is as follows. Major role in the synthesis of nucleoside triphosphates other than ATP. The ATP gamma phosphate is transferred to the NDP beta phosphate via a ping-pong mechanism, using a phosphorylated active-site intermediate. Possesses nucleoside-diphosphate kinase, serine/threonine-specific protein kinase, geranyl and farnesyl pyrophosphate kinase, histidine protein kinase and 3'-5' exonuclease activities. Involved in cell proliferation, differentiation and development, signal transduction, G protein-coupled receptor endocytosis, and gene expression. Required for neural development including neural patterning and cell fate determination. During GZMA-mediated cell death, works in concert with TREX1. NME1 nicks one strand of DNA and TREX1 removes bases from the free 3' end to enhance DNA damage and prevent DNA end reannealing and rapid repair. The sequence is that of Nucleoside diphosphate kinase A (NME1) from Homo sapiens (Human).